A 141-amino-acid chain; its full sequence is Hemoglobin subunit alpha (141 aa).

Residues valine 1 to arginine 141 enclose the Globin domain. A Phosphoserine modification is found at serine 3. Residues lysine 7 and lysine 11 each carry the N6-succinyllysine modification. N6-acetyllysine; alternate is present on lysine 16. An N6-succinyllysine; alternate modification is found at lysine 16. Tyrosine 24 bears the Phosphotyrosine mark. A Phosphoserine modification is found at serine 35. Lysine 40 bears the N6-succinyllysine mark. Residue serine 49 is modified to Phosphoserine. Residue histidine 58 participates in O2 binding. A heme b-binding site is contributed by histidine 87. Phosphoserine is present on serine 102. A Phosphothreonine modification is found at threonine 108. Phosphoserine is present on residues serine 124 and serine 131. Residues threonine 134 and threonine 137 each carry the phosphothreonine modification. At serine 138 the chain carries Phosphoserine.

It belongs to the globin family. Heterotetramer of two alpha chains and two beta chains. Red blood cells.

Involved in oxygen transport from the lung to the various peripheral tissues. Functionally, hemopressin acts as an antagonist peptide of the cannabinoid receptor CNR1. Hemopressin-binding efficiently blocks cannabinoid receptor CNR1 and subsequent signaling. This is Hemoglobin subunit alpha (HBA) from Suncus murinus (Asian house shrew).